Here is a 122-residue protein sequence, read N- to C-terminus: Ig heavy chain V region M603 (122 aa).

The region spanning 1-121 (EVKLVESGGG…WGAGTTVTVS (121 aa)) is the Ig-like domain.

This is Ig heavy chain V region M603 from Mus musculus (Mouse).